The chain runs to 334 residues: MADERTSDSVKTRYDIALMKLNDIKIAVFRDSLSTYVEQKTGLTIQFNWPKSRCLVISTLCKIPFPTKSAAELQEMCSLLLCCPERLQLLGYVSVWGEETRDVCLTKTLVFAGEDEKFYGLDFVNETLYLLAETTERFAVLGLRRYDPVYREKDIRFLTKIDDVLQSLIDAQDNLWKFATIVYKNSGRHYIMKSCLENNDGVFVLFLTRKEDFPSRMEWNFFSDVYESMPYDGQVIGSIGKTLLYPKTMFVMMDLSGAIYGIDTIGTGIGSCVKIADDFESFLRQGIVRGYRRYKFFHRNINTVQEILPLCPHTSLGPTFSNNYIYDLSSEDDE.

Belongs to the herpesviridae US22 family.

Its function is as follows. Isoform 3 can transactivate the human immunodeficiency virus type 1 promoter. The sequence is that of Protein U17/U16 (U17/U16) from Human herpesvirus 6A (strain Uganda-1102) (HHV-6 variant A).